Here is a 212-residue protein sequence, read N- to C-terminus: Cytidylate kinase (212 aa).

7-15 serves as a coordination point for ATP; it reads GPAASGKGT.

Belongs to the cytidylate kinase family. Type 1 subfamily.

It localises to the cytoplasm. The catalysed reaction is CMP + ATP = CDP + ADP. The enzyme catalyses dCMP + ATP = dCDP + ADP. The polypeptide is Cytidylate kinase (Bradyrhizobium sp. (strain ORS 278)).